A 452-amino-acid chain; its full sequence is UPF0210 protein Ccel_1722 (452 aa).

Belongs to the UPF0210 family. In terms of assembly, homodimer.

This Ruminiclostridium cellulolyticum (strain ATCC 35319 / DSM 5812 / JCM 6584 / H10) (Clostridium cellulolyticum) protein is UPF0210 protein Ccel_1722.